The following is a 418-amino-acid chain: Putative ion-transport protein YfeO (418 aa).

Helical transmembrane passes span 10–30 (LLLS…LIMV), 54–74 (DSPL…GLVI), 99–119 (ALPG…SLGP), 120–140 (EHPI…RLLP), 149–169 (ILAS…AALI), 186–206 (LFAP…FFHP), 223–243 (ILSG…AVWC), 258–278 (VFVL…GGPV), 300–320 (DYFL…ASGF), 322–342 (GGRI…LHEH), 343–363 (VPAV…VLVV), and 371–391 (LFMA…CIVM).

The protein belongs to the chloride channel (TC 2.A.49) family.

The protein localises to the cell membrane. The protein is Putative ion-transport protein YfeO of Escherichia coli O45:K1 (strain S88 / ExPEC).